Consider the following 88-residue polypeptide: Small ribosomal subunit protein uS15 (88 aa).

It belongs to the universal ribosomal protein uS15 family. As to quaternary structure, part of the 30S ribosomal subunit. Forms a bridge to the 50S subunit in the 70S ribosome, contacting the 23S rRNA.

Functionally, one of the primary rRNA binding proteins, it binds directly to 16S rRNA where it helps nucleate assembly of the platform of the 30S subunit by binding and bridging several RNA helices of the 16S rRNA. Its function is as follows. Forms an intersubunit bridge (bridge B4) with the 23S rRNA of the 50S subunit in the ribosome. This chain is Small ribosomal subunit protein uS15, found in Flavobacterium johnsoniae (strain ATCC 17061 / DSM 2064 / JCM 8514 / BCRC 14874 / CCUG 350202 / NBRC 14942 / NCIMB 11054 / UW101) (Cytophaga johnsonae).